Reading from the N-terminus, the 450-residue chain is UDP-N-acetylmuramoylalanine--D-glutamate ligase (450 aa).

119–125 contacts ATP; sequence GSNGKTT.

It belongs to the MurCDEF family.

The protein localises to the cytoplasm. The enzyme catalyses UDP-N-acetyl-alpha-D-muramoyl-L-alanine + D-glutamate + ATP = UDP-N-acetyl-alpha-D-muramoyl-L-alanyl-D-glutamate + ADP + phosphate + H(+). The protein operates within cell wall biogenesis; peptidoglycan biosynthesis. Cell wall formation. Catalyzes the addition of glutamate to the nucleotide precursor UDP-N-acetylmuramoyl-L-alanine (UMA). The sequence is that of UDP-N-acetylmuramoylalanine--D-glutamate ligase from Bacillus cereus (strain AH187).